The sequence spans 349 residues: Sterol-4-alpha-carboxylate 3-dehydrogenase ERG26, decarboxylating (349 aa).

NADP(+)-binding positions include Gly-11–Gly-17, Asp-62–Leu-63, and Cys-84–Ser-86. Residues Ser-124 and Tyr-151 each contribute to the substrate site. NADP(+) contacts are provided by residues Tyr-151, Lys-155, and Pro-179–Ile-182. Catalysis depends on Lys-155, which acts as the Proton donor.

It belongs to the 3-beta-HSD family. In terms of assembly, heterotetramer of ERG25, ERG26, ERG27 and ERG28. ERG28 acts as a scaffold to tether ERG27 and other 4,4-demethylation-related enzymes, forming a demethylation enzyme complex, in the endoplasmic reticulum.

The protein localises to the endoplasmic reticulum membrane. The catalysed reaction is 4beta-methylzymosterol-4alpha-carboxylate + NADP(+) = 3-dehydro-4-methylzymosterol + CO2 + NADPH. It functions in the pathway steroid biosynthesis; zymosterol biosynthesis; zymosterol from lanosterol: step 4/6. Inhibited by FR171456, a natural product with broad antifungal activity. Sterol-4-alpha-carboxylate 3-dehydrogenase; part of the third module of ergosterol biosynthesis pathway that includes the late steps of the pathway. ERG26 is a catalytic component of the C-4 demethylation complex that catalyzes the oxidative decarboxylation that results in a reduction of the 3-beta-hydroxy group at the C-3 carbon to an oxo group. The third module or late pathway involves the ergosterol synthesis itself through consecutive reactions that mainly occur in the endoplasmic reticulum (ER) membrane. Firstly, the squalene synthase ERG9 catalyzes the condensation of 2 farnesyl pyrophosphate moieties to form squalene, which is the precursor of all steroids. Squalene synthase is crucial for balancing the incorporation of farnesyl diphosphate (FPP) into sterol and nonsterol isoprene synthesis. Secondly, the squalene epoxidase ERG1 catalyzes the stereospecific oxidation of squalene to (S)-2,3-epoxysqualene, which is considered to be a rate-limiting enzyme in steroid biosynthesis. Then, the lanosterol synthase ERG7 catalyzes the cyclization of (S)-2,3 oxidosqualene to lanosterol, a reaction that forms the sterol core. In the next steps, lanosterol is transformed to zymosterol through a complex process involving various demethylation, reduction and desaturation reactions. The lanosterol 14-alpha-demethylase ERG11 (also known as CYP51) catalyzes C14-demethylation of lanosterol to produce 4,4'-dimethyl cholesta-8,14,24-triene-3-beta-ol, which is critical for ergosterol biosynthesis. The C-14 reductase ERG24 reduces the C14=C15 double bond of 4,4-dimethyl-cholesta-8,14,24-trienol to produce 4,4-dimethyl-cholesta-8,24-dienol. 4,4-dimethyl-cholesta-8,24-dienol is substrate of the C-4 demethylation complex ERG25-ERG26-ERG27 in which ERG25 catalyzes the three-step monooxygenation required for the demethylation of 4,4-dimethyl and 4alpha-methylsterols, ERG26 catalyzes the oxidative decarboxylation that results in a reduction of the 3-beta-hydroxy group at the C-3 carbon to an oxo group, and ERG27 is responsible for the reduction of the keto group on the C-3. ERG28 has a role as a scaffold to help anchor ERG25, ERG26 and ERG27 to the endoplasmic reticulum and ERG29 regulates the activity of the iron-containing C4-methylsterol oxidase ERG25. Then, the sterol 24-C-methyltransferase ERG6 catalyzes the methyl transfer from S-adenosyl-methionine to the C-24 of zymosterol to form fecosterol. The C-8 sterol isomerase ERG2 catalyzes the reaction which results in unsaturation at C-7 in the B ring of sterols and thus converts fecosterol to episterol. The sterol-C5-desaturase ERG3 then catalyzes the introduction of a C-5 double bond in the B ring to produce 5-dehydroepisterol. The C-22 sterol desaturase ERG5 further converts 5-dehydroepisterol into ergosta-5,7,22,24(28)-tetraen-3beta-ol by forming the C-22(23) double bond in the sterol side chain. Finally, ergosta-5,7,22,24(28)-tetraen-3beta-ol is substrate of the C-24(28) sterol reductase ERG4 to produce ergosterol. The chain is Sterol-4-alpha-carboxylate 3-dehydrogenase ERG26, decarboxylating from Saccharomyces cerevisiae (strain ATCC 204508 / S288c) (Baker's yeast).